Consider the following 722-residue polypeptide: Ribosomal RNA large subunit methyltransferase K/L (722 aa).

A THUMP domain is found at 55–167 (TGYRACLWSR…GNEGTLYLDL (113 aa)).

This sequence belongs to the methyltransferase superfamily. RlmKL family.

Its subcellular location is the cytoplasm. The enzyme catalyses guanosine(2445) in 23S rRNA + S-adenosyl-L-methionine = N(2)-methylguanosine(2445) in 23S rRNA + S-adenosyl-L-homocysteine + H(+). It carries out the reaction guanosine(2069) in 23S rRNA + S-adenosyl-L-methionine = N(2)-methylguanosine(2069) in 23S rRNA + S-adenosyl-L-homocysteine + H(+). In terms of biological role, specifically methylates the guanine in position 2445 (m2G2445) and the guanine in position 2069 (m7G2069) of 23S rRNA. This is Ribosomal RNA large subunit methyltransferase K/L from Desulfotalea psychrophila (strain LSv54 / DSM 12343).